Reading from the N-terminus, the 441-residue chain is uncharacterized protein (441 aa).

The next 11 helical transmembrane spans lie at 62–82, 88–108, 112–132, 154–174, 192–212, 224–244, 247–267, 312–332, 335–355, 363–383, and 399–419; these read FLSLGFFLVIIVLVGIAFEIG, LILTLALEVYFFSTALLKLFG, IALTLHFFEPLLVFILLIIAL, ALLHFTPLFNLLEGMASLLVV, WMFFILLNASSAISMSLYLLY, ALMIGFSLATVIVISIYGVAS, ANLSEASLMFLYIAYTVYMVC, IVLFMVAAAKTVAPSVFATFA, ISVMYAVTRILPAIQNNIIFL, QGMWSILSPCILIAVYTNLLL, and ILCSAEIWRWVSAILTLLLYA.

It localises to the membrane. This is an uncharacterized protein from Schizosaccharomyces pombe (strain 972 / ATCC 24843) (Fission yeast).